A 210-amino-acid polypeptide reads, in one-letter code: Cytidylate kinase (210 aa).

7 to 15 serves as a coordination point for ATP; it reads GPAASGKGT.

Belongs to the cytidylate kinase family. Type 1 subfamily.

Its subcellular location is the cytoplasm. The enzyme catalyses CMP + ATP = CDP + ADP. The catalysed reaction is dCMP + ATP = dCDP + ADP. The chain is Cytidylate kinase from Methylobacterium sp. (strain 4-46).